The following is a 493-amino-acid chain: Probable cytosol aminopeptidase (493 aa).

Residues Lys-265 and Asp-270 each contribute to the Mn(2+) site. Lys-277 is an active-site residue. Positions 288, 347, and 349 each coordinate Mn(2+). The active site involves Arg-351.

Belongs to the peptidase M17 family. It depends on Mn(2+) as a cofactor.

Its subcellular location is the cytoplasm. The catalysed reaction is Release of an N-terminal amino acid, Xaa-|-Yaa-, in which Xaa is preferably Leu, but may be other amino acids including Pro although not Arg or Lys, and Yaa may be Pro. Amino acid amides and methyl esters are also readily hydrolyzed, but rates on arylamides are exceedingly low.. The enzyme catalyses Release of an N-terminal amino acid, preferentially leucine, but not glutamic or aspartic acids.. Functionally, presumably involved in the processing and regular turnover of intracellular proteins. Catalyzes the removal of unsubstituted N-terminal amino acids from various peptides. This chain is Probable cytosol aminopeptidase, found in Hydrogenovibrio crunogenus (strain DSM 25203 / XCL-2) (Thiomicrospira crunogena).